We begin with the raw amino-acid sequence, 1526 residues long: Ig-like and fibronectin type-III domain-containing protein 2 (1526 aa).

The first 19 residues, 1-19 (MMRWRLAVLFLTLLASTTG), serve as a signal peptide directing secretion. Positions 20 to 39 (DDTTTKASVSTTTKKGTDGP) are disordered. The Extracellular portion of the chain corresponds to 20-1415 (DDTTTKASVS…RRSASKGSSS (1396 aa)). The span at 24–33 (TKASVSTTTK) shows a compositional bias: low complexity. In terms of domain architecture, Ig-like C2-type 1 spans 39-170 (PHLTTDDEGF…ELLEFQVEVL (132 aa)). Cysteine 61 and cysteine 154 form a disulfide bridge. Residues asparagine 87, asparagine 143, asparagine 158, asparagine 181, asparagine 414, asparagine 427, asparagine 475, asparagine 489, asparagine 533, asparagine 590, asparagine 617, and asparagine 662 are each glycosylated (N-linked (GlcNAc...) asparagine). A Fibronectin type-III 1 domain is found at 379 to 470 (APRGKRDVDF…VRNIASTNVH (92 aa)). The region spanning 587-678 (APGNVTISEL…TAKLFSTLPT (92 aa)) is the Fibronectin type-III 2 domain. The region spanning 682–724 (PLCTIGEPIYMNDGRVMICDAVNPCPNGFRCTGAGSDLSYCCP) is the WR1 domain. N-linked (GlcNAc...) asparagine glycans are attached at residues asparagine 754, asparagine 871, asparagine 906, asparagine 939, asparagine 979, asparagine 1004, and asparagine 1049. 2 Fibronectin type-III domains span residues 827 to 914 (AVRN…TKPA) and 924 to 1020 (APEK…AQKD). The Ig-like C2-type 2 domain maps to 1116–1207 (ASVTMKKDKI…SRVEASSEVI (92 aa)). A disulfide bridge links cysteine 1137 with cysteine 1190. N-linked (GlcNAc...) asparagine glycosylation is present at asparagine 1250. The region spanning 1314-1406 (APSEVSNVRI…SAIPKDSEPR (93 aa)) is the Fibronectin type-III 5 domain. The helical transmembrane segment at 1416 to 1436 (AFWIVVILVVFGVLIAGLAVL) threads the bilayer. Residues 1437–1526 (SKRRELPYPI…NGMRYAKLET (90 aa)) are Cytoplasmic-facing. The disordered stretch occupies residues 1485–1518 (SATTGTAAATQSEWQSANLEANSTTDNSHEYRNG). The span at 1495-1510 (QSEWQSANLEANSTTD) shows a compositional bias: polar residues.

The protein localises to the cell membrane. The sequence is that of Ig-like and fibronectin type-III domain-containing protein 2 from Caenorhabditis elegans.